Here is a 485-residue protein sequence, read N- to C-terminus: Protein nucleotidyltransferase YdiU (485 aa).

Positions 90, 92, 93, 113, 125, 126, 176, and 183 each coordinate ATP. Aspartate 252 functions as the Proton acceptor in the catalytic mechanism. Asparagine 253 and aspartate 262 together coordinate Mg(2+). Aspartate 262 contacts ATP.

Belongs to the SELO family. It depends on Mg(2+) as a cofactor. Mn(2+) is required as a cofactor.

The enzyme catalyses L-seryl-[protein] + ATP = 3-O-(5'-adenylyl)-L-seryl-[protein] + diphosphate. It carries out the reaction L-threonyl-[protein] + ATP = 3-O-(5'-adenylyl)-L-threonyl-[protein] + diphosphate. It catalyses the reaction L-tyrosyl-[protein] + ATP = O-(5'-adenylyl)-L-tyrosyl-[protein] + diphosphate. The catalysed reaction is L-histidyl-[protein] + UTP = N(tele)-(5'-uridylyl)-L-histidyl-[protein] + diphosphate. The enzyme catalyses L-seryl-[protein] + UTP = O-(5'-uridylyl)-L-seryl-[protein] + diphosphate. It carries out the reaction L-tyrosyl-[protein] + UTP = O-(5'-uridylyl)-L-tyrosyl-[protein] + diphosphate. In terms of biological role, nucleotidyltransferase involved in the post-translational modification of proteins. It can catalyze the addition of adenosine monophosphate (AMP) or uridine monophosphate (UMP) to a protein, resulting in modifications known as AMPylation and UMPylation. The polypeptide is Protein nucleotidyltransferase YdiU (Aliivibrio salmonicida (strain LFI1238) (Vibrio salmonicida (strain LFI1238))).